The following is a 258-amino-acid chain: MSLIDPRAIIDPTAVLADNVEVGPWSIIGPGVEIGEGTVVGPHVVLKGPTRIGKHNRIYQFSSVGEDTPDLKYKGEETRLVIGDHNVIREGVTIHRGTVQDRAETTLGDHNLIMAYAHIGHDSVIGNHVILVNNTALAGHVHVDDWAILSGFTLVHQFCHIGAHSFSGMGTAIGKDVPAFVTVFGNPAEARSMNFEGMRRRGFSEEAIHALRRAYKTVYRQGLTIGQALADLAEPAAQFPEVAVFLQSIQTSTRGIIR.

Belongs to the transferase hexapeptide repeat family. LpxA subfamily. Homotrimer.

It localises to the cytoplasm. The catalysed reaction is a (3R)-hydroxyacyl-[ACP] + UDP-N-acetyl-alpha-D-glucosamine = a UDP-3-O-[(3R)-3-hydroxyacyl]-N-acetyl-alpha-D-glucosamine + holo-[ACP]. Its pathway is glycolipid biosynthesis; lipid IV(A) biosynthesis; lipid IV(A) from (3R)-3-hydroxytetradecanoyl-[acyl-carrier-protein] and UDP-N-acetyl-alpha-D-glucosamine: step 1/6. Involved in the biosynthesis of lipid A, a phosphorylated glycolipid that anchors the lipopolysaccharide to the outer membrane of the cell. The protein is Acyl-[acyl-carrier-protein]--UDP-N-acetylglucosamine O-acyltransferase of Pseudomonas syringae pv. syringae (strain B728a).